The following is a 284-amino-acid chain: Tropomyosin (284 aa).

The stretch at 1–284 (MEAIKNKMQA…DQTFAELTGY (284 aa)) forms a coiled coil.

It belongs to the tropomyosin family. In terms of assembly, homodimer.

Tropomyosin, in association with the troponin complex, plays a central role in the calcium dependent regulation of muscle contraction. The chain is Tropomyosin from Dermatophagoides pteronyssinus (European house dust mite).